Here is a 288-residue protein sequence, read N- to C-terminus: Homoserine kinase (288 aa).

79 to 89 lines the ATP pocket; that stretch reads PPARGLGSSSA.

The protein belongs to the GHMP kinase family. Homoserine kinase subfamily.

It localises to the cytoplasm. The catalysed reaction is L-homoserine + ATP = O-phospho-L-homoserine + ADP + H(+). Its pathway is amino-acid biosynthesis; L-threonine biosynthesis; L-threonine from L-aspartate: step 4/5. Catalyzes the ATP-dependent phosphorylation of L-homoserine to L-homoserine phosphate. The chain is Homoserine kinase from Listeria innocua serovar 6a (strain ATCC BAA-680 / CLIP 11262).